The sequence spans 239 residues: Large ribosomal subunit protein uL1 (239 aa).

It belongs to the universal ribosomal protein uL1 family. In terms of assembly, part of the 50S ribosomal subunit.

Binds directly to 23S rRNA. The L1 stalk is quite mobile in the ribosome, and is involved in E site tRNA release. Functionally, protein L1 is also a translational repressor protein, it controls the translation of the L11 operon by binding to its mRNA. The polypeptide is Large ribosomal subunit protein uL1 (Rhodococcus erythropolis (strain PR4 / NBRC 100887)).